Here is a 486-residue protein sequence, read N- to C-terminus: MTTIVDSNLPVARPSWDHSRLESRIVHLGCGAFHRAHQALYTHHLLESTDSDWGICEVNLMPGNDRVLIENLKKQQLLYTVAEKGAESTELKIIGSMKEALHPEIDGCEGILNAMARPQTAIVSLTVTEKGYCADAASGQLDLNNPLIKHDLENPTAPKSAIGYIVEALRLRREKGLKAFTVMSCDNVRENGHVAKVAVLGLAQARDPQLAAWIEENVTFPCTMVDRIVPAATPETLQEIADQLGVYDPCAIACEPFRQWVIEDNFVNGRPDWDKVGAQFVADVVPFEMMKLRMLNGSHSFLAYLGYLGGYETIADTVTNPAYRKAAFALMMQEQAPTLSMPEGTDLNAYATLLIERFSNPSLRHRTWQIAMDGSQKLPQRLLDPVRLHLQNGGSWRHLALGVAGWMRYTQGVDEQGNAIDVVDPMLAEFQKINAQYQGADRVKALLGLSGIFADDLPQNADFVGAVTAAYQQLCERGARECVAAL.

25-36 (IVHLGCGAFHRA) lines the NAD(+) pocket.

The protein belongs to the mannitol dehydrogenase family. UxuB subfamily.

It carries out the reaction D-mannonate + NAD(+) = keto-D-fructuronate + NADH + H(+). It participates in carbohydrate metabolism; pentose and glucuronate interconversion. The chain is D-mannonate oxidoreductase (uxuB) from Escherichia coli (strain K12).